Here is a 172-residue protein sequence, read N- to C-terminus: Adenine phosphoribosyltransferase (172 aa).

This sequence belongs to the purine/pyrimidine phosphoribosyltransferase family. Homodimer.

It is found in the cytoplasm. The enzyme catalyses AMP + diphosphate = 5-phospho-alpha-D-ribose 1-diphosphate + adenine. It participates in purine metabolism; AMP biosynthesis via salvage pathway; AMP from adenine: step 1/1. Catalyzes a salvage reaction resulting in the formation of AMP, that is energically less costly than de novo synthesis. In Latilactobacillus sakei subsp. sakei (strain 23K) (Lactobacillus sakei subsp. sakei), this protein is Adenine phosphoribosyltransferase.